The chain runs to 827 residues: MAFSGALTLTDLNDYLGPSQACIKPVQAADVPSQDHSDVSALAASASTHIAIDHDGAYYESSTPPSSSLSAADSRPRQRTKLETAQISLNDCLACSGCVTSAESVLITMQSQDEMRRAIAELNQSNANKLVVASISTQSLASLSAKYTFQHPQPSSSRSASTSTLPLRVLLHRISYFLKTVFGFDHVYDTTFARHIALKEHQREFFQRRENARKRAKLSNAPADDDDRLHPDQVDGPTLPMLASACPGWICYAEKTHGELLPYISTTKSPQQVAGVIAKRFLPERLGLLAPSAPDQPSIYHVTVMPCYDKKLEASRPDFYDDITGTKEVDCVLTTGELDKLMLDEAFDICTPVPGEQEAIQESIAELSLQQAFNTPNPDVGSASVSMMPRLPRLPQLLDQPGSSSGGYLFLLMRAVWLDWISVHWDSLPLSVREQGILPKLDVRVIRTTDFTEFVLRAPTQLVEPCNDDTSQSSILFRGAQCYGFRNLQNLVRKLQKQTGVRNTRGAAARLVDADGNAIGAAAARNRASSAKARARGRGGMMRRARAGAAAVVKSSPLNPDAEAVDVTQLQLSTAHEEDERGYDYVEVMACPSGCVNGGGQIRPPTQSDVDVTRSSTTVDNHATDPEGYTKGGWAADQAGDHDGLELMLNKTCSNKTSAVPDEADEEKEVRGWQGTSKEWVRRVEEAYWQDSSVAQTRVTVAAVNRAVDQGGANDSGSSTPTLVGSGANTPLSSSNAKSIRVEDHQRLLESLAVSNAERAQRTRVVKLGGDAMAYADVLAELVVNELCLLAAPAGDALALDSARDKLFRTQYRAVQDEAVNGLAVQW.

Residue cysteine 22 coordinates [4Fe-4S] cluster. Residues 57-77 (AYYESSTPPSSSLSAADSRPR) form a disordered region. Positions 61-73 (SSTPPSSSLSAAD) are enriched in low complexity. Residues cysteine 92, cysteine 95, and cysteine 98 each contribute to the [4Fe-4S] cluster site. Residues 209–231 (RENARKRAKLSNAPADDDDRLHP) form a disordered region. Positions 246, 307, 591, and 595 each coordinate [4Fe-4S] cluster. Disordered stretches follow at residues 599–637 (GGQIRPPTQSDVDVTRSSTTVDNHATDPEGYTKGGWAAD) and 709–739 (DQGGANDSGSSTPTLVGSGANTPLSSSNAKS). 2 stretches are compositionally biased toward polar residues: residues 604 to 621 (PPTQSDVDVTRSSTTVDN) and 713 to 738 (ANDSGSSTPTLVGSGANTPLSSSNAK).

Belongs to the NARF family.

Component of the cytosolic Fe/S protein assembly machinery. Required for maturation of extramitochondrial Fe/S proteins. May play a role in the transfer of pre-assembled Fe/S clusters to target apoproteins. The sequence is that of Cytosolic Fe-S cluster assembly factor NAR1 (NAR1) from Mycosarcoma maydis (Corn smut fungus).